The sequence spans 804 residues: Phenylalanine--tRNA ligase beta subunit (804 aa).

Positions phenylalanine 40–tyrosine 161 constitute a tRNA-binding domain. A B5 domain is found at glutamate 413–proline 486. Mg(2+) is bound by residues aspartate 464, aspartate 470, glutamate 473, and glutamate 474. The 95-residue stretch at aspartate 710–isoleucine 804 folds into the FDX-ACB domain.

Belongs to the phenylalanyl-tRNA synthetase beta subunit family. Type 1 subfamily. Tetramer of two alpha and two beta subunits. Mg(2+) serves as cofactor.

The protein resides in the cytoplasm. The enzyme catalyses tRNA(Phe) + L-phenylalanine + ATP = L-phenylalanyl-tRNA(Phe) + AMP + diphosphate + H(+). The protein is Phenylalanine--tRNA ligase beta subunit of Mycoplasmoides gallisepticum (strain R(low / passage 15 / clone 2)) (Mycoplasma gallisepticum).